We begin with the raw amino-acid sequence, 1004 residues long: NADH:acrylate oxidoreductase (1004 aa).

Thr455 carries the FMN phosphoryl threonine modification. The FAD site is built by Ala508, Glu527, Asn535, Thr536, Gly540, Gly541, and Asp775. Arg834 functions as the Proton donor in the catalytic mechanism. FAD contacts are provided by His941, Glu970, Ala985, and Leu986.

This sequence belongs to the FAD-dependent oxidoreductase 2 family. FRD/SDH subfamily. It depends on FAD as a cofactor. FMN serves as cofactor. Post-translationally, is flavinylated on Thr-455 by ApbE, encoded in a neighboring gene. Flavinylation is essential for catalytic activity.

It carries out the reaction acrylate + NADH + H(+) = propanoate + NAD(+). In terms of biological role, catalyzes the NADH-dependent reduction of acrylate to propanoate. The principal role of ARD in Vibrio seems to be the energy-saving detoxification of acrylate coming from the environment. May also use acrylate as the terminal electron acceptor for NADH regeneration at oxygen deficiency. NADPH cannot replace NADH as the electron donor. Is also able to reduce methacrylate in vitro, but with a much lower efficiency. The chain is NADH:acrylate oxidoreductase from Vibrio harveyi (Beneckea harveyi).